A 449-amino-acid chain; its full sequence is Maltoporin (449 aa).

The first 24 residues, 1–24 (MITLRKLPLAVAVAAGVMSAQAMA), serve as a signal peptide directing secretion.

Belongs to the porin LamB (TC 1.B.3) family. Homotrimer formed of three 18-stranded antiparallel beta-barrels, containing three independent channels.

The protein localises to the cell outer membrane. The catalysed reaction is beta-maltose(in) = beta-maltose(out). Its function is as follows. Involved in the transport of maltose and maltodextrins. This Citrobacter koseri (strain ATCC BAA-895 / CDC 4225-83 / SGSC4696) protein is Maltoporin.